The sequence spans 336 residues: Glucokinase (336 aa).

Residue 12-17 (ADIGGT) participates in ATP binding.

This sequence belongs to the bacterial glucokinase family.

It is found in the cytoplasm. The enzyme catalyses D-glucose + ATP = D-glucose 6-phosphate + ADP + H(+). This chain is Glucokinase, found in Helicobacter pylori (strain J99 / ATCC 700824) (Campylobacter pylori J99).